The chain runs to 197 residues: uncharacterized protein (197 aa).

Residues 1–30 (MSTYIIINIALLIAIVALIFFLSKKTKSEA) form the signal peptide.

This is an uncharacterized protein from Acanthamoeba polyphaga (Amoeba).